A 535-amino-acid polypeptide reads, in one-letter code: Estrogen receptor (535 aa).

A disordered region spans residues serine 1–threonine 21. The tract at residues serine 1 to tyrosine 104 is modulating. The span at serine 12 to threonine 21 shows a compositional bias: polar residues. NR C4-type zinc fingers lie at residues cysteine 105–cysteine 125 and cysteine 141–cysteine 165. Positions cysteine 105–methionine 170 form a DNA-binding region, nuclear receptor. Residues valine 171–methionine 236 form a hinge region. Residues aspartate 187–tryptophan 229 form a disordered region. A compositionally biased stretch (basic and acidic residues) spans glycine 195–threonine 208. Residues glycine 214–leucine 223 are compositionally biased toward low complexity. The 237-residue stretch at proline 237–histidine 473 folds into the NR LBD domain. Residues proline 478 to proline 535 are disordered. Residues serine 492–serine 502 are compositionally biased toward low complexity. The segment covering glycine 525 to proline 535 has biased composition (polar residues).

This sequence belongs to the nuclear hormone receptor family. NR3 subfamily. As to quaternary structure, binds DNA as a homodimer. Can form a heterodimer with ER-beta. Highest expression in brain and liver.

The protein resides in the nucleus. Functionally, the steroid hormones and their receptors are involved in the regulation of eukaryotic gene expression and affect cellular proliferation and differentiation in target tissues. This is Estrogen receptor (esr1) from Salmo salar (Atlantic salmon).